Here is a 256-residue protein sequence, read N- to C-terminus: Calsenilin (256 aa).

A disordered region spans residues 1–22 (MQRTKEAVKASDGNLLGDPGRI). A Glycyl lysine isopeptide (Lys-Gly) (interchain with G-Cter in SUMO1) cross-link involves residue K26. 2 S-palmitoyl cysteine lipidation sites follow: C45 and C46. Phosphoserine is present on residues S60 and S63. The region spanning 67-123 (LELSTVRHQPEGLDQLQAQTKFTKKELQSLYRGFKNECPTGLVDEDTFKLIYSQFFP) is the EF-hand 1; degenerate domain. K90 participates in a covalent cross-link: Glycyl lysine isopeptide (Lys-Gly) (interchain with G-Cter in SUMO1). EF-hand domains are found at residues 126-161 (DATT…LLRG), 162-197 (TVHE…IYDM), and 210-245 (APLE…DENI). Residues D175, N177, D179, C181, E186, D223, N225, D227, and E234 each coordinate Ca(2+). Residues 243-256 (ENIMNSMQLFENVI) are interaction with KCND2.

The protein belongs to the recoverin family. As to quaternary structure, binds to DNA as a homomultimer. Dimerization is induced by binding to calcium. Interacts with the C-terminus of PSEN1 and PSEN2 and with PSEN2 CTF subunit. Associates with KCN1. Component of heteromultimeric potassium channels. Identified in potassium channel complexes containing KCND1, KCND2, KCND3, KCNIP1, KCNIP2, KCNIP3, KCNIP4, DPP6 and DPP10. Interacts with KCND2 and KCND3. Palmitoylated. Palmitoylation enhances association with the plasma membrane. In terms of processing, proteolytically cleaved by caspase-3. In terms of tissue distribution, highly expressed in brain. Isoform 1 or isoform 4 (T+ forms) are expressed at equal levels with isoform 2 or isoform 3 (T- forms). Primarily detected in the layer V and deep layer VI of the cerebral cortex, the hippocampus, and the entire cerebellum. Expressed at low levels in testis. Also expressed in heart.

Its subcellular location is the cytoplasm. The protein resides in the cell membrane. The protein localises to the endoplasmic reticulum. It localises to the golgi apparatus. It is found in the nucleus. Functionally, calcium-dependent transcriptional repressor that binds to the DRE element of genes including PDYN and FOS. Affinity for DNA is reduced upon binding to calcium and enhanced by binding to magnesium. Seems to be involved in nociception. Its function is as follows. Regulatory subunit of Kv4/D (Shal)-type voltage-gated rapidly inactivating A-type potassium channels, such as KCND2/Kv4.2 and KCND3/Kv4.3. Modulates channel expression at the cell membrane, gating characteristics, inactivation kinetics and rate of recovery from inactivation in a calcium-dependent and isoform-specific manner. In terms of biological role, may play a role in the regulation of PSEN2 proteolytic processing and apoptosis. Together with PSEN2 involved in modulation of amyloid-beta formation. In Mus musculus (Mouse), this protein is Calsenilin (Kcnip3).